The following is a 208-amino-acid chain: 28 kDa heat- and acid-stable phosphoprotein homolog (208 aa).

Disordered stretches follow at residues 1–133 (MAGG…VTKK) and 145–208 (LSRR…LGLA). The span at 16 to 44 (FGRDYERSKGKISRDRVYDEEDIIKRNQE) shows a compositional bias: basic and acidic residues. Low complexity-rich tracts occupy residues 52–69 (GSES…NKSK) and 84–100 (RNPN…PTTK). Residues 105–121 (SDSEDDSDKESDSEDEI) show a composition bias toward acidic residues. Residues 137-206 (INVNAKVELS…EKMAERRRLG (70 aa)) are a coiled coil. Composition is skewed to basic and acidic residues over residues 145–154 (LSRREKEELA) and 162–208 (QNEK…LGLA).

The protein belongs to the PDAP1 family.

This Dictyostelium discoideum (Social amoeba) protein is 28 kDa heat- and acid-stable phosphoprotein homolog.